Reading from the N-terminus, the 658-residue chain is Carnitine O-palmitoyltransferase 2, mitochondrial (658 aa).

Residues 1 to 25 (MVPRLLLRAWPRGPAVGPGAPSRPL) constitute a mitochondrion transit peptide. Residues 26 to 178 (SAGSGPGQYL…GLLEPEVFHL (153 aa)) are Mitochondrial matrix-facing. Position 69 is an N6-succinyllysine (K69). Position 79 is an N6-acetyllysine (K79). K85 is modified (N6-succinyllysine). Residues 179–208 (NPAKSDTITFKRLIRFVPSSLSWYGAYLVN) constitute an intramembrane region (note=Mitochondrial inner membrane). At 209-658 (AYPLDMSQYF…DALEGKSIKS (450 aa)) the chain is on the mitochondrial matrix side. K239 carries the post-translational modification N6-acetyllysine; alternate. K239 is subject to N6-succinyllysine; alternate. K305 bears the N6-acetyllysine mark. H372 functions as the Proton acceptor in the catalytic mechanism. N6-succinyllysine occurs at positions 424 and 439. 452–464 (GKEFLKKQKLSPD) is a CoA binding site. (R)-carnitine-binding residues include Y486, S488, and T499. Residues K510 and K544 each carry the N6-acetyllysine; alternate modification. N6-succinyllysine; alternate occurs at positions 510 and 544.

It belongs to the carnitine/choline acetyltransferase family.

Its subcellular location is the mitochondrion inner membrane. It carries out the reaction (R)-carnitine + hexadecanoyl-CoA = O-hexadecanoyl-(R)-carnitine + CoA. It catalyses the reaction octanoyl-CoA + (R)-carnitine = O-octanoyl-(R)-carnitine + CoA. The enzyme catalyses decanoyl-CoA + (R)-carnitine = O-decanoyl-(R)-carnitine + CoA. The catalysed reaction is dodecanoyl-CoA + (R)-carnitine = O-dodecanoyl-R-carnitine + CoA. It carries out the reaction tetradecanoyl-CoA + (R)-carnitine = O-tetradecanoyl-(R)-carnitine + CoA. It catalyses the reaction (R)-carnitine + octadecanoyl-CoA = O-octadecanoyl-(R)-carnitine + CoA. The enzyme catalyses eicosanoyl-CoA + (R)-carnitine = O-eicosanoyl-(R)-carnitine + CoA. The catalysed reaction is (9Z)-tetradecenoyl-CoA + (R)-carnitine = O-(9Z)-tetradecenoyl-(R)-carnitine + CoA. It carries out the reaction (5Z)-tetradecenoyl-CoA + (R)-carnitine = O-(5Z)-tetradecenoyl-(R)-carnitine + CoA. It catalyses the reaction (R)-carnitine + (9Z)-octadecenoyl-CoA = O-(9Z)-octadecenoyl-(R)-carnitine + CoA. The enzyme catalyses 4,8-dimethylnonanoyl-CoA + (R)-carnitine = O-4,8-dimethylnonanoyl-(R)-carnitine + CoA. Its pathway is lipid metabolism; fatty acid beta-oxidation. With respect to regulation, inhibited by trans-2-hexadecanoyl-CoA. Functionally, involved in the intramitochondrial synthesis of acylcarnitines from accumulated acyl-CoA metabolites. Reconverts acylcarnitines back into the respective acyl-CoA esters that can then undergo beta-oxidation, an essential step for the mitochondrial uptake of long-chain fatty acids and their subsequent beta-oxidation in the mitochondrion. Active with medium (C8-C12) and long-chain (C14-C18) acyl-CoA esters. In Homo sapiens (Human), this protein is Carnitine O-palmitoyltransferase 2, mitochondrial.